The sequence spans 514 residues: 2,3-bisphosphoglycerate-independent phosphoglycerate mutase (514 aa).

Residues aspartate 13 and serine 63 each contribute to the Mn(2+) site. Residue serine 63 is the Phosphoserine intermediate of the active site. Substrate is bound by residues histidine 124, arginine 154 to aspartate 155, arginine 186, arginine 192, arginine 258 to arginine 261, and lysine 332. Residues aspartate 399, histidine 403, aspartate 440, histidine 441, and histidine 459 each contribute to the Mn(2+) site.

Belongs to the BPG-independent phosphoglycerate mutase family. In terms of assembly, monomer. Mn(2+) is required as a cofactor.

The enzyme catalyses (2R)-2-phosphoglycerate = (2R)-3-phosphoglycerate. It participates in carbohydrate degradation; glycolysis; pyruvate from D-glyceraldehyde 3-phosphate: step 3/5. Catalyzes the interconversion of 2-phosphoglycerate and 3-phosphoglycerate. The sequence is that of 2,3-bisphosphoglycerate-independent phosphoglycerate mutase from Legionella pneumophila (strain Lens).